We begin with the raw amino-acid sequence, 117 residues long: Large ribosomal subunit protein bL19 (117 aa).

The protein belongs to the bacterial ribosomal protein bL19 family.

In terms of biological role, this protein is located at the 30S-50S ribosomal subunit interface and may play a role in the structure and function of the aminoacyl-tRNA binding site. This Shewanella amazonensis (strain ATCC BAA-1098 / SB2B) protein is Large ribosomal subunit protein bL19.